The primary structure comprises 574 residues: Transmembrane protein 108 (574 aa).

The helical transmembrane segment at 9 to 29 (YCQLLSFLLTLALTKALVLAV) threads the bilayer. The interval 31–169 (EPSPRESLQT…ATTRRPPRPP (139 aa)) is interaction with SH3GL2. Disordered regions lie at residues 32–352 (PSPR…SGVF) and 364–417 (DATV…PRPL). A compositionally biased stretch (polar residues) spans 58-86 (TRLSSVLTLNPTPDGPSSQAAATLETTVS). Over residues 132 to 160 (LPPGDATPTTTLPTKPAGTTSRPTVAPRA) the composition is skewed to low complexity. The tract at residues 173-406 (RKGAGGSTRT…SPAEEEAEAS (234 aa)) is interaction with DST (isoform 1). Residues 245–271 (FSSTQPQTVSPATAPRSTSRVPPTTSL) are compositionally biased toward polar residues. Residues 292–312 (TSPGGEPAATAATGAPASTQP) are compositionally biased toward low complexity. The span at 316–332 (PSQSPHGDVQDSASHSD) shows a compositional bias: polar residues. A helical membrane pass occupies residues 468-488 (IAWVIVAISVPISSCSVLLTV). The interval 489-574 (CCMRRKKKTA…FVGNDQVSEI (86 aa)) is interaction with CYFIP2.

In terms of assembly, interacts with DST (isoform 1). Interacts with SH3GL2. Interacts (via N-terminus) with CYFIP1 and CYFIP2; the interactions associate TMEM108 with the WAVE1 complex. Post-translationally, glycosylated. As to expression, expressed in the nervous system tissues, such as hippocampus and spinal cord, is barely detectable in peripheral tissues such as heart, lung, liver, kidney and muscle. In brain, highly expressed in dentate gyrus neurons and expressed in cortex, olfactory bulb, ammon's horn, cerebellum, hypothalamus and striatum.

The protein localises to the membrane. It localises to the postsynaptic density. It is found in the endosome membrane. The protein resides in the cell projection. Its subcellular location is the axon. The protein localises to the dendrite. It localises to the early endosome. Its function is as follows. Transmembrane protein required for proper cognitive functions. Involved in the development of dentate gyrus (DG) neuron circuitry, is necessary for AMPA receptors surface expression and proper excitatory postsynaptic currents of DG granule neurons. Regulates the organization and stability of the microtubule network of sensory neurons to allow axonal transport. Through the interaction with DST, mediates the docking of the dynein/dynactin motor complex to vesicle cargos for retrograde axonal transport. In hippocampal neurons, required for BDNF-dependent dendrite outgrowth. Cooperates with SH3GL2 and recruits the WAVE1 complex to facilitate actin-dependent BDNF:NTRK2 early endocytic trafficking and mediate signaling from early endosomes. The protein is Transmembrane protein 108 of Mus musculus (Mouse).